We begin with the raw amino-acid sequence, 706 residues long: Maternal embryonic leucine zipper kinase (706 aa).

The Protein kinase domain occupies 11-265 (YAVHDELGSG…VKKLLEHDWL (255 aa)). Residues 17–25 (LGSGGFGKV) and Lys-40 each bind ATP. The active-site Proton acceptor is the Asp-132. Disordered regions lie at residues 366 to 386 (LDKSGLEDDDSDPSSISSSSD), 433 to 493 (FTGR…SRGP), and 506 to 555 (SVYT…IGSA). Polar residues-rich tracts occupy residues 447–461 (SVRSSDSASLGSAAT) and 506–515 (SVYTTPNTRP). The KA1 domain maps to 656–705 (QETVHGWMTVELEIVRLQMFDKVGIRRKRLKGDAFMYKKVCEKILQMAKI).

It belongs to the protein kinase superfamily. CAMK Ser/Thr protein kinase family. SNF1 subfamily. Post-translationally, may be phosphorylated at Thr-169 by par-4 and/or autophosphorylated which likely results in its activation. Phosphorylation is not required for co-localization with the centrosome.

The protein localises to the cytoplasm. It localises to the cytoskeleton. Its subcellular location is the microtubule organizing center. It is found in the centrosome. It carries out the reaction L-seryl-[protein] + ATP = O-phospho-L-seryl-[protein] + ADP + H(+). The enzyme catalyses L-threonyl-[protein] + ATP = O-phospho-L-threonyl-[protein] + ADP + H(+). In terms of biological role, serine/threonine-protein kinase involved in cell autonomous neuroblast asymmetric divisions that generate one precursor cell and one apoptotic cell by controlling spindle positioning, myosin distribution and the segregation of cell fate determinants. Plays a role in neural fate specification in several dopaminergic linages, acting in concert with ham-1. Involved in phosphorylation of multiple proteins associated with key developmental processes, including the cell cycle, apoptosis, endocytosis, and asymmetric cell division. Promotes cell shedding during embryogenesis, probably through the endocytosis-mediated removal of cell adhesion molecules such as hmp-1 from the cell surface. May act downstream of par-4/strd-1/mop-25 to regulate cell shedding. This is Maternal embryonic leucine zipper kinase from Caenorhabditis elegans.